A 323-amino-acid polypeptide reads, in one-letter code: tRNA(Ile)-lysidine synthase (323 aa).

Ser-33–Ser-38 contributes to the ATP binding site.

Belongs to the tRNA(Ile)-lysidine synthase family.

Its subcellular location is the cytoplasm. The catalysed reaction is cytidine(34) in tRNA(Ile2) + L-lysine + ATP = lysidine(34) in tRNA(Ile2) + AMP + diphosphate + H(+). Functionally, ligates lysine onto the cytidine present at position 34 of the AUA codon-specific tRNA(Ile) that contains the anticodon CAU, in an ATP-dependent manner. Cytidine is converted to lysidine, thus changing the amino acid specificity of the tRNA from methionine to isoleucine. This chain is tRNA(Ile)-lysidine synthase, found in Mycobacterium bovis (strain ATCC BAA-935 / AF2122/97).